A 361-amino-acid polypeptide reads, in one-letter code: G kinase-anchoring protein 1-A (361 aa).

2 disordered regions span residues 22–111 (DSSS…EDWQ) and 140–183 (FEES…KDFQ). Over residues 35–48 (AHSSGKAHSGSAAR) the composition is skewed to low complexity. A coiled-coil region spans residues 51–79 (NKGNEKKKEKRRKKKEQQQSEANELRNLA). The segment covering 158–168 (KVNKKDKRKNN) has biased composition (basic residues). Coiled coils occupy residues 246–296 (KDGR…QEGE) and 326–346 (AALEQERSKVKILQAEQVKYQ).

This sequence belongs to the GKAP1 family.

The protein localises to the golgi apparatus. Its function is as follows. May play a role in the regulation of insulin-dependent IRS1 tyrosine phosphorylation in adipocytes. This Xenopus laevis (African clawed frog) protein is G kinase-anchoring protein 1-A (gkap1-a).